The following is a 179-amino-acid chain: MILARGEILKLIKDGSLGIEPFTEDVVRENGLDLRVGNEYAIYAFENQVIDPCELESTRHLFSIVEAKDGRIIIPPRSFALLTTMEYVKFPRDVIGFCNLRSTLARYGLGVPPTIIDTGFEGNITIEVINNSGNYVVLRPGMRFLHVVLAKTIGEAKYQGKYLGQRGVTPPKGLKGECS.

DCTP contacts are provided by residues 101–106 and Asp-117; that span reads RSTLAR. Catalysis depends on Glu-127, which acts as the Proton donor/acceptor. DCTP is bound at residue Gln-165.

Belongs to the dCTP deaminase family. In terms of assembly, homotrimer.

The catalysed reaction is dCTP + H2O + H(+) = dUTP + NH4(+). It participates in pyrimidine metabolism; dUMP biosynthesis; dUMP from dCTP (dUTP route): step 1/2. In terms of biological role, catalyzes the deamination of dCTP to dUTP. The sequence is that of dCTP deaminase from Caldivirga maquilingensis (strain ATCC 700844 / DSM 13496 / JCM 10307 / IC-167).